Reading from the N-terminus, the 567-residue chain is Proline--tRNA ligase (567 aa).

The protein belongs to the class-II aminoacyl-tRNA synthetase family. ProS type 1 subfamily. Homodimer.

It localises to the cytoplasm. The enzyme catalyses tRNA(Pro) + L-proline + ATP = L-prolyl-tRNA(Pro) + AMP + diphosphate. Functionally, catalyzes the attachment of proline to tRNA(Pro) in a two-step reaction: proline is first activated by ATP to form Pro-AMP and then transferred to the acceptor end of tRNA(Pro). As ProRS can inadvertently accommodate and process non-cognate amino acids such as alanine and cysteine, to avoid such errors it has two additional distinct editing activities against alanine. One activity is designated as 'pretransfer' editing and involves the tRNA(Pro)-independent hydrolysis of activated Ala-AMP. The other activity is designated 'posttransfer' editing and involves deacylation of mischarged Ala-tRNA(Pro). The misacylated Cys-tRNA(Pro) is not edited by ProRS. The chain is Proline--tRNA ligase from Geobacillus sp. (strain WCH70).